A 464-amino-acid polypeptide reads, in one-letter code: NADH dehydrogenase [ubiquinone] flavoprotein 1, mitochondrial (464 aa).

The N-terminal 20 residues, 1–20 (MLATRRLLGWSLPARVSVRF), are a transit peptide targeting the mitochondrion. Lys-81 is modified (N6-acetyllysine; alternate). Lys-81 carries the post-translational modification N6-succinyllysine; alternate. 87 to 96 (GRGGAGFPTG) contributes to the NADH binding site. Lys-104 is modified (N6-acetyllysine). 199–247 (RGAGAYICGEETALIESIEGKQGKPRLKPPFPADVGVFGCPTTVANVET) is an FMN binding site. Omega-N-methylarginine is present on Arg-257. Residue Lys-375 is modified to N6-acetyllysine. Positions 379, 382, 385, and 425 each coordinate [4Fe-4S] cluster.

Belongs to the complex I 51 kDa subunit family. In terms of assembly, core subunit of respiratory chain NADH dehydrogenase (Complex I) which is composed of 45 different subunits. This is a component of the flavoprotein-sulfur (FP) fragment of the enzyme. Interacts with RAB5IF. The cofactor is FMN. [4Fe-4S] cluster is required as a cofactor.

The protein resides in the mitochondrion inner membrane. It carries out the reaction a ubiquinone + NADH + 5 H(+)(in) = a ubiquinol + NAD(+) + 4 H(+)(out). Core subunit of the mitochondrial membrane respiratory chain NADH dehydrogenase (Complex I) which catalyzes electron transfer from NADH through the respiratory chain, using ubiquinone as an electron acceptor. Part of the peripheral arm of the enzyme, where the electrons from NADH are accepted by flavin mononucleotide (FMN) and then passed along a chain of iron-sulfur clusters by electron tunnelling to the final acceptor ubiquinone. Contains FMN, which is the initial electron acceptor as well as one iron-sulfur cluster. The chain is NADH dehydrogenase [ubiquinone] flavoprotein 1, mitochondrial from Pan troglodytes (Chimpanzee).